The sequence spans 918 residues: Cap-specific mRNA (nucleoside-2'-O-)-methyltransferase 1 (918 aa).

Residues 1–18 (MADRKSDEGEDEYQHKEQ) are compositionally biased toward basic and acidic residues. Disordered stretches follow at residues 1 to 56 (MADR…EERA) and 62 to 81 (KRGYQAGDDEEDDFTAEEEP). Residues 19–30 (MVTNRTSSFQPK) are compositionally biased toward polar residues. Basic and acidic residues predominate over residues 43 to 56 (RAADRREEFMEERA). The span at 68 to 80 (GDDEEDDFTAEEE) shows a compositional bias: acidic residues. Residues 86 to 132 (PLTVAERLMAAMGHKAGEGLGKHGQGISEPIASSTQRGRTGLGHNAG) enclose the G-patch domain. The region spanning 236–465 (FFQNRAAMKT…ERYITCKGLR (230 aa)) is the RrmJ-type SAM-dependent 2'-O-MTase domain. S-adenosyl-L-methionine contacts are provided by Gly298 and Asp379. Catalysis depends on Lys419, which acts as the Proton acceptor.

The catalysed reaction is a 5'-end (N(7)-methyl 5'-triphosphoguanosine)-ribonucleoside in mRNA + S-adenosyl-L-methionine = a 5'-end (N(7)-methyl 5'-triphosphoguanosine)-(2'-O-methyl-ribonucleoside) in mRNA + S-adenosyl-L-homocysteine + H(+). S-adenosyl-L-methionine-dependent methyltransferase that mediates mRNA cap1 2'-O-ribose methylation to the 5'-cap structure of mRNAs. Methylates the ribose of the first nucleotide of a m(7)GpppG-capped mRNA to produce m(7)GpppNmp (cap1). Cap1 modification is linked to higher levels of translation. The chain is Cap-specific mRNA (nucleoside-2'-O-)-methyltransferase 1 from Caenorhabditis elegans.